The sequence spans 181 residues: Inner membrane-spanning protein YciB (181 aa).

5 consecutive transmembrane segments (helical) span residues phenylalanine 8–alanine 28, isoleucine 53–phenylalanine 73, tryptophan 76–glycine 96, leucine 121–phenylalanine 141, and phenylalanine 149–isoleucine 169.

It belongs to the YciB family.

The protein localises to the cell inner membrane. Plays a role in cell envelope biogenesis, maintenance of cell envelope integrity and membrane homeostasis. The polypeptide is Inner membrane-spanning protein YciB (Coxiella burnetii (strain RSA 331 / Henzerling II)).